A 146-amino-acid chain; its full sequence is MSEIIWDLALIQKYNHSGPRYTSYPTALEFNENYTNEDFIRAAARYPERPLSLYVHIPFCHKLCYFCGCNKVITRHRHKVEIYLDYLEREIKTRAPLFQNRLVTQIHWGRGTPTYLDEDQSARLMQMLRANFDVSDDAEISIEMDP.

Residue Tyr54 coordinates S-adenosyl-L-methionine. Cys60 and Cys64 together coordinate [4Fe-4S] cluster. Position 66 (Phe66) interacts with S-adenosyl-L-methionine. Cys67 serves as a coordination point for [4Fe-4S] cluster. Residues 111 to 112 and Glu143 contribute to the S-adenosyl-L-methionine site; that span reads GT.

It belongs to the anaerobic coproporphyrinogen-III oxidase family. Monomer. The cofactor is [4Fe-4S] cluster.

The protein localises to the cytoplasm. It catalyses the reaction coproporphyrinogen III + 2 S-adenosyl-L-methionine = protoporphyrinogen IX + 2 5'-deoxyadenosine + 2 L-methionine + 2 CO2. It participates in porphyrin-containing compound metabolism; protoporphyrin-IX biosynthesis; protoporphyrinogen-IX from coproporphyrinogen-III (AdoMet route): step 1/1. Its function is as follows. Involved in the heme biosynthesis. Catalyzes the anaerobic oxidative decarboxylation of propionate groups of rings A and B of coproporphyrinogen III to yield the vinyl groups in protoporphyrinogen IX. The chain is Oxygen-independent coproporphyrinogen III oxidase (hemN) from Mannheimia haemolytica (Pasteurella haemolytica).